The chain runs to 96 residues: C-C motif chemokine 20 (96 aa).

A signal peptide spans 1 to 26 (MCCTKSLLLAALMSVLLLHLCGESEA). 2 disulfide bridges follow: Cys-32-Cys-58 and Cys-33-Cys-74.

It belongs to the intercrine beta (chemokine CC) family. Post-translationally, C-terminal processed forms which lack 1, 3 or 6 amino acids are produced by proteolytic cleavage after secretion from peripheral blood monocytes. In terms of tissue distribution, expressed in the seminal plasma, endometrial fluid and follicular fluid (at protein level). Expressed predominantly in the liver, lymph nodes, appendix, peripheral blood lymphocytes, and fetal lung. Low levels seen in thymus, prostate, testis, small intestine and colon.

Its subcellular location is the secreted. Functionally, acts as a ligand for C-C chemokine receptor CCR6. Signals through binding and activation of CCR6 and induces a strong chemotactic response and mobilization of intracellular calcium ions. The ligand-receptor pair CCL20-CCR6 is responsible for the chemotaxis of dendritic cells (DC), effector/memory T-cells and B-cells and plays an important role at skin and mucosal surfaces under homeostatic and inflammatory conditions, as well as in pathology, including cancer and various autoimmune diseases. CCL20 acts as a chemotactic factor that attracts lymphocytes and, slightly, neutrophils, but not monocytes. Involved in the recruitment of both the pro-inflammatory IL17 producing helper T-cells (Th17) and the regulatory T-cells (Treg) to sites of inflammation. Required for optimal migration of thymic natural regulatory T cells (nTregs) and DN1 early thymocyte progenitor cells. C-terminal processed forms have been shown to be equally chemotactically active for leukocytes. Positively regulates sperm motility and chemotaxis via its binding to CCR6 which triggers Ca2+ mobilization in the sperm which is important for its motility. Inhibits proliferation of myeloid progenitors in colony formation assays. May be involved in formation and function of the mucosal lymphoid tissues by attracting lymphocytes and dendritic cells towards epithelial cells. Possesses antibacterial activity towards E.coli ATCC 25922 and S.aureus ATCC 29213. In Homo sapiens (Human), this protein is C-C motif chemokine 20 (CCL20).